We begin with the raw amino-acid sequence, 238 residues long: Group 3 late-embryogenesis abundant protein, mitochondrial (238 aa).

A disordered region spans residues 41–62 (SSGSGRPADNWAESQKEKAKAG). A coiled-coil region spans residues 50–202 (NWAESQKEKA…AGDLKDKAQQ (153 aa)). LEA 11-mer repeat repeat units follow at residues 64–74 (KDAQAEVGKVA), 89–99 (KDAVKQGANDL), 140–150 (KEAAENAWEKT), 151–161 (KDVAENLKDKV), 179–189 (KDRAQDAASEV), and 190–200 (KHKAGDLKDKA). 2 stretches are compositionally biased toward basic and acidic residues: residues 182–200 (AQDAASEVKHKAGDLKDKA) and 213–225 (DNRKQDQQQRRDS). The interval 182–238 (AQDAASEVKHKAGDLKDKAQQVIHDATTQSGDNRKQDQQQRRDSQGSQSGQNSRSRN) is disordered. The segment covering 226–238 (QGSQSGQNSRSRN) has biased composition (low complexity).

It belongs to the LEA type 4 family.

It localises to the mitochondrion. Functionally, mitochondrial heat soluble protein acting as a molecular shield in water-deficient condition. This is Group 3 late-embryogenesis abundant protein, mitochondrial from Hypsibius exemplaris (Freshwater tardigrade).